The chain runs to 455 residues: Retinoic acid receptor beta (455 aa).

The tract at residues 1 to 87 (MTTSSRTCPV…PLPPPRVYKP (87 aa)) is modulating. The interval 45–78 (QSHPPTSGCSTPSPASVETQSTSSEELVPSPPSP) is disordered. Residues 47 to 66 (HPPTSGCSTPSPASVETQST) are compositionally biased toward polar residues. NR C4-type zinc fingers lie at residues 88-108 (CFVCQDKSSGYHYGVSACEGC) and 124-148 (CHRDKNCVINKVTRNRCQYCRLQKC). The segment at residues 88–153 (CFVCQDKSSG…RLQKCFEVGM (66 aa)) is a DNA-binding region (nuclear receptor). Positions 154–182 (SKESVRNDRNKKKKEPTKQESTENYEMTA) are hinge. One can recognise an NR LBD domain in the interval 183-417 (ELDDLTEKIR…PLIQEMLENS (235 aa)). Residues 416 to 455 (NSEGHEPLTPTSNGNTAEHSPSISPSSVDNSSVSQSPMVQ) are disordered. The span at 424 to 434 (TPTSNGNTAEH) shows a compositional bias: polar residues. Over residues 435 to 455 (SPSISPSSVDNSSVSQSPMVQ) the composition is skewed to low complexity.

It belongs to the nuclear hormone receptor family. NR1 subfamily. In terms of assembly, heterodimer; with a RXR molecule. Binds DNA preferentially as a RAR/RXR heterodimer. As to expression, both isoforms expressed in heart, lung, kidney, liver, brain, lung and testis. Isoform Beta-1 is highly expressed in testes and brain. Levels increase during testes maturation. Isoform beta-2 is predominant in heart, kidney and lung.

The protein localises to the nucleus. Its function is as follows. Receptor for retinoic acid. Retinoic acid receptors bind as heterodimers to their target response elements in response to their ligands, all-trans or 9-cis retinoic acid, and regulate gene expression in various biological processes. The RAR/RXR heterodimers bind to the retinoic acid response elements (RARE) composed of tandem 5'-AGGTCA-3' sites known as DR1-DR5. May be required for Sertoli cell differentiation and spermatogenesis. This chain is Retinoic acid receptor beta (RARB), found in Coturnix japonica (Japanese quail).